A 500-amino-acid polypeptide reads, in one-letter code: Aspartyl/glutamyl-tRNA(Asn/Gln) amidotransferase subunit B (500 aa).

Belongs to the GatB/GatE family. GatB subfamily. Heterotrimer of A, B and C subunits.

The enzyme catalyses L-glutamyl-tRNA(Gln) + L-glutamine + ATP + H2O = L-glutaminyl-tRNA(Gln) + L-glutamate + ADP + phosphate + H(+). It carries out the reaction L-aspartyl-tRNA(Asn) + L-glutamine + ATP + H2O = L-asparaginyl-tRNA(Asn) + L-glutamate + ADP + phosphate + 2 H(+). In terms of biological role, allows the formation of correctly charged Asn-tRNA(Asn) or Gln-tRNA(Gln) through the transamidation of misacylated Asp-tRNA(Asn) or Glu-tRNA(Gln) in organisms which lack either or both of asparaginyl-tRNA or glutaminyl-tRNA synthetases. The reaction takes place in the presence of glutamine and ATP through an activated phospho-Asp-tRNA(Asn) or phospho-Glu-tRNA(Gln). This is Aspartyl/glutamyl-tRNA(Asn/Gln) amidotransferase subunit B from Allorhizobium ampelinum (strain ATCC BAA-846 / DSM 112012 / S4) (Agrobacterium vitis (strain S4)).